Consider the following 367-residue polypeptide: Quinolinate synthase (367 aa).

The iminosuccinate site is built by histidine 46 and serine 63. Cysteine 110 is a [4Fe-4S] cluster binding site. Iminosuccinate contacts are provided by residues 141–143 (YVN) and serine 162. [4Fe-4S] cluster is bound at residue cysteine 229. Iminosuccinate-binding positions include 255–257 (HPE) and threonine 272. Cysteine 319 is a [4Fe-4S] cluster binding site.

Belongs to the quinolinate synthase family. Type 3 subfamily. [4Fe-4S] cluster serves as cofactor.

The protein resides in the cytoplasm. The enzyme catalyses iminosuccinate + dihydroxyacetone phosphate = quinolinate + phosphate + 2 H2O + H(+). It functions in the pathway cofactor biosynthesis; NAD(+) biosynthesis; quinolinate from iminoaspartate: step 1/1. Catalyzes the condensation of iminoaspartate with dihydroxyacetone phosphate to form quinolinate. The sequence is that of Quinolinate synthase from Bacillus velezensis (strain DSM 23117 / BGSC 10A6 / LMG 26770 / FZB42) (Bacillus amyloliquefaciens subsp. plantarum).